Here is a 382-residue protein sequence, read N- to C-terminus: Lipid-A-disaccharide synthase (382 aa).

The protein belongs to the LpxB family.

It catalyses the reaction 2-N,3-O-bis[(3R)-3-hydroxytetradecanoyl]-alpha-D-glucosaminyl 1-phosphate + UDP-2-N,3-O-bis[(3R)-3-hydroxytetradecanoyl]-alpha-D-glucosamine = lipid A disaccharide (E. coli) + UDP + H(+). The enzyme catalyses a lipid X + a UDP-2-N,3-O-bis[(3R)-3-hydroxyacyl]-alpha-D-glucosamine = a lipid A disaccharide + UDP + H(+). It participates in glycolipid biosynthesis; lipid IV(A) biosynthesis; lipid IV(A) from (3R)-3-hydroxytetradecanoyl-[acyl-carrier-protein] and UDP-N-acetyl-alpha-D-glucosamine: step 5/6. Functionally, condensation of UDP-2,3-diacylglucosamine and 2,3-diacylglucosamine-1-phosphate to form lipid A disaccharide, a precursor of lipid A, a phosphorylated glycolipid that anchors the lipopolysaccharide to the outer membrane of the cell. This is Lipid-A-disaccharide synthase from Enterobacter sp. (strain 638).